The following is a 262-amino-acid chain: Small ribosomal subunit protein eS1 (262 aa).

This sequence belongs to the eukaryotic ribosomal protein eS1 family. In terms of assembly, component of the small ribosomal subunit. Mature ribosomes consist of a small (40S) and a large (60S) subunit. The 40S subunit contains about 33 different proteins and 1 molecule of RNA (18S). The 60S subunit contains about 49 different proteins and 3 molecules of RNA (25S, 5.8S and 5S).

The protein localises to the cytoplasm. The chain is Small ribosomal subunit protein eS1 from Cryptosporidium hominis.